We begin with the raw amino-acid sequence, 329 residues long: MLRVFIFFVFLGSGLAGKVKSPITCKYFISKNNTWYKYNVTILNDTIILPAYNTIPTNATGISCTCHDIDYLQKNNISIRYNTSILKTFQDIRIIRCGMKNISEIAAGFSKELKFLDLRYNDLQFIEYNILRKLIRSNTPTYLYYNNLMCGKRNCPLYYFLLKQEQTYLKLLPQFFLRRISFSNNHTYLYHFLSCGNKPGHEFLEYQTKFCRTKFPEINITVNQLIAKKNTERYKNCYPFVLVSIICSCISSLFLLICLLRTICKKYSCTKQGKTTHSYIPLIPSYTFSLKKHRHPETAVVEDHASTANSPIVYIPTTEEKKVSCSRRK.

The first 31 residues, 1-31 (MLRVFIFFVFLGSGLAGKVKSPITCKYFISK), serve as a signal peptide directing secretion. N-linked (GlcNAc...) asparagine; by host glycosylation is found at Asn-32, Asn-39, Asn-44, Asn-58, Asn-76, Asn-82, Asn-101, Asn-185, and Asn-219. Topologically, residues 32–239 (NNTWYKYNVT…NTERYKNCYP (208 aa)) are extracellular. Residues 240–260 (FVLVSIICSCISSLFLLICLL) traverse the membrane as a helical segment. Residues 261 to 329 (RTICKKYSCT…EKKVSCSRRK (69 aa)) lie on the Cytoplasmic side of the membrane.

This sequence belongs to the asfivirus I329L family. Highly glycosylated.

It is found in the host endoplasmic reticulum membrane. Its subcellular location is the host Golgi apparatus membrane. Functionally, viral TLR3 homolog that probably prevents TLR3 dimerization and subsequent induction of IFN. Inhibits dsRNA-stimulated activation of NF-kB and IRF3. The sequence is that of Transmembrane protein I329L from Ornithodoros (relapsing fever ticks).